A 130-amino-acid polypeptide reads, in one-letter code: MYKAETRGIMVTVEPRFVEEESSPGESRYFFAYTVEIVNNGSEQVQLRSRHWRIIDGRGACQEVRGAGVVGKQPVLEPGESFSYTSGCPLTTPDGLMAGSYTMSTIGGESFEAEIPAFSLDSPHLRRVVH.

Positions 3–127 constitute an ApaG domain; the sequence is KAETRGIMVT…FSLDSPHLRR (125 aa).

In Methylorubrum extorquens (strain CM4 / NCIMB 13688) (Methylobacterium extorquens), this protein is Protein ApaG.